Consider the following 123-residue polypeptide: Small ribosomal subunit protein uS12 (123 aa).

At D89 the chain carries 3-methylthioaspartic acid.

Belongs to the universal ribosomal protein uS12 family. As to quaternary structure, part of the 30S ribosomal subunit. Contacts proteins S8 and S17. May interact with IF1 in the 30S initiation complex.

Functionally, with S4 and S5 plays an important role in translational accuracy. Interacts with and stabilizes bases of the 16S rRNA that are involved in tRNA selection in the A site and with the mRNA backbone. Located at the interface of the 30S and 50S subunits, it traverses the body of the 30S subunit contacting proteins on the other side and probably holding the rRNA structure together. The combined cluster of proteins S8, S12 and S17 appears to hold together the shoulder and platform of the 30S subunit. The protein is Small ribosomal subunit protein uS12 of Caulobacter sp. (strain K31).